The sequence spans 120 residues: MGHGVEGRNRPSAPLDSQAAAQVASTLQALATPSRLMILTQLRNGPLPVTDLAEAIGMEQSAVSHQLRVLRNLGLVVGDRAGRSIVYSLYDTHVAQLLDEAIYHSEHLHLGLSDRHPSAG.

Residues 15 to 109 (LDSQAAAQVA…EAIYHSEHLH (95 aa)) form the HTH arsR-type domain. A DNA-binding region (H-T-H motif) is located at residues 49–72 (VTDLAEAIGMEQSAVSHQLRVLRN). The Ni(2+) site is built by aspartate 91, histidine 93, histidine 104, and histidine 107.

As to quaternary structure, homodimer.

Binding to DNA is inhibited by nickel and, to some extent, cobalt ions. Its function is as follows. Represses transcription of ctpJ/nmtA, by binding to its promoter region. The sequence is that of HTH-type transcriptional regulator NmtR (nmtR) from Mycobacterium tuberculosis (strain ATCC 25618 / H37Rv).